Consider the following 119-residue polypeptide: Immunoglobulin lambda variable 2-11 (119 aa).

Positions 1 to 19 are cleaved as a signal peptide; it reads MAWALLLLSLLTQGTGSWA. Pyrrolidone carboxylic acid is present on Gln-20. A framework-1 region spans residues 20–44; it reads QSALTQPRSVSGSPGQSVTISCTGT. An Ig-like domain is found at 20 to 119; that stretch reads QSALTQPRSV…CSYAGSYTFH (100 aa). Residues Cys-41 and Cys-109 are joined by a disulfide bond. Residues 45 to 53 are complementarity-determining-1; sequence SSDVGGYNY. Residues 54–70 are framework-2; the sequence is VSWYQQHPGKAPKLMIY. The interval 71-73 is complementarity-determining-2; sequence DVS. Positions 74–109 are framework-3; sequence KRPSGVPDRFSGSKSGNTASLTISGLQAEDEADYYC. A complementarity-determining-3 region spans residues 110-119; sequence CSYAGSYTFH.

Immunoglobulins are composed of two identical heavy chains and two identical light chains; disulfide-linked.

It localises to the secreted. The protein localises to the cell membrane. V region of the variable domain of immunoglobulin light chains that participates in the antigen recognition. Immunoglobulins, also known as antibodies, are membrane-bound or secreted glycoproteins produced by B lymphocytes. In the recognition phase of humoral immunity, the membrane-bound immunoglobulins serve as receptors which, upon binding of a specific antigen, trigger the clonal expansion and differentiation of B lymphocytes into immunoglobulins-secreting plasma cells. Secreted immunoglobulins mediate the effector phase of humoral immunity, which results in the elimination of bound antigens. The antigen binding site is formed by the variable domain of one heavy chain, together with that of its associated light chain. Thus, each immunoglobulin has two antigen binding sites with remarkable affinity for a particular antigen. The variable domains are assembled by a process called V-(D)-J rearrangement and can then be subjected to somatic hypermutations which, after exposure to antigen and selection, allow affinity maturation for a particular antigen. The sequence is that of Immunoglobulin lambda variable 2-11 from Homo sapiens (Human).